We begin with the raw amino-acid sequence, 405 residues long: Glucose-1-phosphate adenylyltransferase 1 (405 aa).

Alpha-D-glucose 1-phosphate-binding positions include Tyr-96, Gly-161, 176–177, and Ser-194; that span reads EK.

This sequence belongs to the bacterial/plant glucose-1-phosphate adenylyltransferase family. As to quaternary structure, homotetramer.

It catalyses the reaction alpha-D-glucose 1-phosphate + ATP + H(+) = ADP-alpha-D-glucose + diphosphate. It functions in the pathway glycan biosynthesis; glycogen biosynthesis. Functionally, involved in the biosynthesis of ADP-glucose, a building block required for the elongation reactions to produce glycogen. Catalyzes the reaction between ATP and alpha-D-glucose 1-phosphate (G1P) to produce pyrophosphate and ADP-Glc. The protein is Glucose-1-phosphate adenylyltransferase 1 of Vibrio cholerae serotype O1 (strain ATCC 39315 / El Tor Inaba N16961).